A 519-amino-acid polypeptide reads, in one-letter code: Maturase K (519 aa).

The protein belongs to the intron maturase 2 family. MatK subfamily.

Its subcellular location is the plastid. The protein resides in the chloroplast. Its function is as follows. Usually encoded in the trnK tRNA gene intron. Probably assists in splicing its own and other chloroplast group II introns. The protein is Maturase K of Cycas panzhihuaensis (Dukou cycad).